The following is a 562-amino-acid chain: Glucose-6-phosphate isomerase (562 aa).

E370 (proton donor) is an active-site residue. Residues H401 and K526 contribute to the active site.

This sequence belongs to the GPI family.

The protein resides in the cytoplasm. The enzyme catalyses alpha-D-glucose 6-phosphate = beta-D-fructose 6-phosphate. The protein operates within carbohydrate biosynthesis; gluconeogenesis. It participates in carbohydrate degradation; glycolysis; D-glyceraldehyde 3-phosphate and glycerone phosphate from D-glucose: step 2/4. Catalyzes the reversible isomerization of glucose-6-phosphate to fructose-6-phosphate. This is Glucose-6-phosphate isomerase from Deinococcus geothermalis (strain DSM 11300 / CIP 105573 / AG-3a).